Here is a 114-residue protein sequence, read N- to C-terminus: Nucleoid-associated protein MAB_0319 (114 aa).

This sequence belongs to the YbaB/EbfC family. Homodimer.

It is found in the cytoplasm. The protein resides in the nucleoid. Its function is as follows. Binds to DNA and alters its conformation. May be involved in regulation of gene expression, nucleoid organization and DNA protection. This chain is Nucleoid-associated protein MAB_0319, found in Mycobacteroides abscessus (strain ATCC 19977 / DSM 44196 / CCUG 20993 / CIP 104536 / JCM 13569 / NCTC 13031 / TMC 1543 / L948) (Mycobacterium abscessus).